The sequence spans 1351 residues: Tripartite motif-containing protein 66 (1351 aa).

Residues 105 to 150 form a B box-type 1; atypical zinc finger; that stretch reads MARNCSECKEKRAAHILCTYCNRWLCSSCTEEHRHSPVPGGPFFPR. Residues cysteine 109, cysteine 112, cysteine 133, histidine 139, cysteine 169, histidine 172, cysteine 192, and histidine 197 each coordinate Zn(2+). The B box-type 2 zinc-finger motif lies at 164–205; that stretch reads DFTLYCPLHTQEVLKLFCETCDMLTCHSCLVVEHKEHRCRHV. The stretch at 234-304 forms a coiled coil; it reads AKQIEDRIFE…IMVLNRQFEH (71 aa). Disordered regions lie at residues 542 to 608, 663 to 730, and 857 to 895; these read FGHH…CSQN, APVQ…VRKH, and CPLQ…DPSL. A compositionally biased stretch (pro residues) spans 560–588; that stretch reads QLPPPPPPLPHPPPPLPPPPQQPHPPLPP. Positions 664 to 676 are enriched in polar residues; it reads PVQSQSQEETLQA. Positions 872–884 are enriched in low complexity; sequence TGSSSSSGRTSGS. The PxVxL motif signature appears at 995-999; it reads PYVRL. Residues 1067–1098 are disordered; the sequence is TSLAGQRPPEVEGTSPEEHRLIPRTPGAKKGP. A PHD-type zinc finger spans residues 1105–1152; it reads EDFCAVCLNGGELLCCDRCPKVFHLSCHVPALLSFPGGEWVCTLCRSL. The Bromo domain occupies 1176–1282; it reads GLSMYDQKKC…VFFEGWLKEI (107 aa). The segment at 1289–1351 is disordered; that stretch reads AQPRQEDSDS…FRLANSISQV (63 aa).

As to quaternary structure, can form homodimers and heterodimers. Interacts with CBX5, CBX1 and CBX3 via PxVxL motif.

It localises to the nucleus. Its function is as follows. May function as transcription repressor; The repressive effects are mediated, at least in part, by recruitment of deacetylase activity. May play a role as negative regulator of postmeiotic genes acting through CBX3 complex formation and centromere association. This Homo sapiens (Human) protein is Tripartite motif-containing protein 66 (TRIM66).